Consider the following 811-residue polypeptide: Lon protease 1 (811 aa).

The Lon N-terminal domain maps to 15 to 212 (LPVLSLRDTV…SLALHLYRQI (198 aa)). ATP is bound at residue 376–383 (GPPGTGKT). Positions 613 to 794 (YDQPGVATGM…DEALARCLRL (182 aa)) constitute a Lon proteolytic domain. Active-site residues include Ser700 and Lys743.

Belongs to the peptidase S16 family. As to quaternary structure, homohexamer. Organized in a ring with a central cavity.

Its subcellular location is the cytoplasm. It catalyses the reaction Hydrolysis of proteins in presence of ATP.. Functionally, ATP-dependent serine protease that mediates the selective degradation of mutant and abnormal proteins as well as certain short-lived regulatory proteins. Required for cellular homeostasis and for survival from DNA damage and developmental changes induced by stress. Degrades polypeptides processively to yield small peptide fragments that are 5 to 10 amino acids long. Binds to DNA in a double-stranded, site-specific manner. The chain is Lon protease 1 from Sorangium cellulosum (strain So ce56) (Polyangium cellulosum (strain So ce56)).